We begin with the raw amino-acid sequence, 270 residues long: Acyl-[acyl-carrier-protein]--UDP-N-acetylglucosamine O-acyltransferase (270 aa).

It belongs to the transferase hexapeptide repeat family. LpxA subfamily. In terms of assembly, homotrimer.

Its subcellular location is the cytoplasm. It carries out the reaction a (3R)-hydroxyacyl-[ACP] + UDP-N-acetyl-alpha-D-glucosamine = a UDP-3-O-[(3R)-3-hydroxyacyl]-N-acetyl-alpha-D-glucosamine + holo-[ACP]. Its pathway is glycolipid biosynthesis; lipid IV(A) biosynthesis; lipid IV(A) from (3R)-3-hydroxytetradecanoyl-[acyl-carrier-protein] and UDP-N-acetyl-alpha-D-glucosamine: step 1/6. In terms of biological role, involved in the biosynthesis of lipid A, a phosphorylated glycolipid that anchors the lipopolysaccharide to the outer membrane of the cell. This Sinorhizobium fredii (strain NBRC 101917 / NGR234) protein is Acyl-[acyl-carrier-protein]--UDP-N-acetylglucosamine O-acyltransferase.